The following is a 314-amino-acid chain: Trimethylamine N-oxide-binding protein (314 aa).

The N-terminal stretch at 1–24 is a signal peptide; the sequence is MKKIVSLMSALVISVVSFAGISNA. Residues tryptophan 38, tryptophan 85, glutamate 114, tryptophan 164, and tryptophan 212 each contribute to the trimethylamine N-oxide site.

As to quaternary structure, the complex is probably composed of two ATP-binding proteins (TmoW), two transmembrane proteins (TmoV) and a solute-binding protein (TmoX).

It is found in the periplasm. Functionally, part of the ABC transporter complex TmoXWV involved in trimethylamine N-oxide (TMAO) import. Possesses a high binding affinity toward TMAO, but presents little binding affinity toward betaine, carnitine, trimethylamine (TMA) or dimethylamine (DMA). In Pelagibacter ubique (strain HTCC1062), this protein is Trimethylamine N-oxide-binding protein.